Reading from the N-terminus, the 152-residue chain is MSINIKAVTDDNRAAILDLHVSQNQLSYIESTKVCLEDAKECHYYKPVGLYYEGDLVGFAMYGLFPEYDEDNKNGRVWLDRFFIDKHYQGKGLGKKMLKALIQHLAELYKCKRIYLSIFENNIHAIRLYQRFGFQFNGELDFNGEKVMVKEL.

In terms of domain architecture, N-acetyltransferase spans 3–152; sequence INIKAVTDDN…NGEKVMVKEL (150 aa). Acetyl-CoA is bound by residues 82–84, 89–95, and 122–131; these read FFI, QGKGLGK, and NIHAIRLYQR. Tyr129 functions as the Proton donor in the catalytic mechanism.

The protein belongs to the acetyltransferase family.

The enzyme catalyses an alkane-alpha,omega-diamine + acetyl-CoA = an N-acetylalkane-alpha,omega-diamine + CoA + H(+). It catalyses the reaction spermine + acetyl-CoA = N(1)-acetylspermine + CoA + H(+). It participates in amine and polyamine degradation; spermine degradation. In terms of biological role, probably acetylates spermine to N(1)-acetylspermine. The chain is Probable spermine N(1)-acetyltransferase from Bacillus subtilis subsp. natto (strain BEST195).